The primary structure comprises 408 residues: Acetate kinase (408 aa).

A Mg(2+)-binding site is contributed by asparagine 7. Lysine 14 contributes to the ATP binding site. Arginine 91 provides a ligand contact to substrate. Catalysis depends on aspartate 148, which acts as the Proton donor/acceptor. Residues 208–212 (HLGNG) and 283–285 (DLR) each bind ATP. Position 388 (glutamate 388) interacts with Mg(2+).

It belongs to the acetokinase family. As to quaternary structure, homodimer. It depends on Mg(2+) as a cofactor. The cofactor is Mn(2+).

It localises to the cytoplasm. It carries out the reaction acetate + ATP = acetyl phosphate + ADP. The protein operates within metabolic intermediate biosynthesis; acetyl-CoA biosynthesis; acetyl-CoA from acetate: step 1/2. Catalyzes the formation of acetyl phosphate from acetate and ATP. Can also catalyze the reverse reaction. In Borrelia hermsii (strain HS1 / DAH), this protein is Acetate kinase.